Consider the following 164-residue polypeptide: ATP synthase subunit b (164 aa).

The helical transmembrane segment at 7 to 25 (SFWLAVSFIIFVYLIYRPA) threads the bilayer.

Belongs to the ATPase B chain family. In terms of assembly, F-type ATPases have 2 components, F(1) - the catalytic core - and F(0) - the membrane proton channel. F(1) has five subunits: alpha(3), beta(3), gamma(1), delta(1), epsilon(1). F(0) has three main subunits: a(1), b(2) and c(10-14). The alpha and beta chains form an alternating ring which encloses part of the gamma chain. F(1) is attached to F(0) by a central stalk formed by the gamma and epsilon chains, while a peripheral stalk is formed by the delta and b chains.

It localises to the cell inner membrane. Its function is as follows. F(1)F(0) ATP synthase produces ATP from ADP in the presence of a proton or sodium gradient. F-type ATPases consist of two structural domains, F(1) containing the extramembraneous catalytic core and F(0) containing the membrane proton channel, linked together by a central stalk and a peripheral stalk. During catalysis, ATP synthesis in the catalytic domain of F(1) is coupled via a rotary mechanism of the central stalk subunits to proton translocation. Component of the F(0) channel, it forms part of the peripheral stalk, linking F(1) to F(0). The polypeptide is ATP synthase subunit b (Rickettsia felis (strain ATCC VR-1525 / URRWXCal2) (Rickettsia azadi)).